Here is a 290-residue protein sequence, read N- to C-terminus: Pantothenate synthetase (290 aa).

Residue 30 to 37 (MGALHEGH) coordinates ATP. Histidine 37 (proton donor) is an active-site residue. Glutamine 61 contacts (R)-pantoate. Residue glutamine 61 participates in beta-alanine binding. Residue 147–150 (GEKD) participates in ATP binding. A (R)-pantoate-binding site is contributed by glutamine 153. ATP is bound by residues valine 176 and 184-187 (KSSR).

Belongs to the pantothenate synthetase family. As to quaternary structure, homodimer.

It is found in the cytoplasm. It carries out the reaction (R)-pantoate + beta-alanine + ATP = (R)-pantothenate + AMP + diphosphate + H(+). Its pathway is cofactor biosynthesis; (R)-pantothenate biosynthesis; (R)-pantothenate from (R)-pantoate and beta-alanine: step 1/1. In terms of biological role, catalyzes the condensation of pantoate with beta-alanine in an ATP-dependent reaction via a pantoyl-adenylate intermediate. The protein is Pantothenate synthetase of Chlorobium chlorochromatii (strain CaD3).